We begin with the raw amino-acid sequence, 168 residues long: HTH-type transcriptional regulator IscR (168 aa).

In terms of domain architecture, HTH rrf2-type spans 2–131 (KLTSKGRYAV…DGISLGELMV (130 aa)). A DNA-binding region (H-T-H motif) is located at residues 28-51 (LADISERQGISLSYLEQLFSKLRK). [2Fe-2S] cluster contacts are provided by C92, C98, and C104.

Requires [2Fe-2S] cluster as cofactor.

Regulates the transcription of several operons and genes involved in the biogenesis of Fe-S clusters and Fe-S-containing proteins. This chain is HTH-type transcriptional regulator IscR, found in Aliivibrio salmonicida (strain LFI1238) (Vibrio salmonicida (strain LFI1238)).